The sequence spans 457 residues: MNTTNKQLTEELNNTESNNDHNDFAENNIINLKQLKRKLPEELQVQAEELKIENISSLLKQELVFAILKKSVEQGGLIVGEGVLEVLPDGFGFLRSPEVNYLAGPDDIYISPSQIRRFGLRTGDTVEGQIRAPKAGERYFALLKVNRVNFEDPAKAYHRVHFDNLTPLYPDEKLGLELENNSKDSKDFSTRVIELVAPMGKGQRALIVAPPRTGKTVLLQNIAHAITTNNPEVFLIVLLIDERPEEVTDMQRSVRGEVVSSTFDEPASRHVQLAEMVIEKAKRLVEHKKDVVILVDAITRLARAYNTVVPSSGKVLTGGVDANALQRPKRFFGAARNIENGGSLTIIGTALIETGSRMDEVIFEEFKGTGNSEIVLDRKIADKRIYPAIDITRSGTRKEDLLVDKIILNKMWVLRRIIDPMGSSEAIEFLLKKLENTKTNCAFFEMMKSPERPRNGL.

Residues Met-1–Asp-23 form a disordered region. One can recognise a Rho RNA-BD domain in the interval Leu-77–Asp-152. Residues Gly-200 to Ala-205, Arg-212 to Val-217, and Arg-243 contribute to the ATP site.

Belongs to the Rho family. In terms of assembly, homohexamer. The homohexamer assembles into an open ring structure.

In terms of biological role, facilitates transcription termination by a mechanism that involves Rho binding to the nascent RNA, activation of Rho's RNA-dependent ATPase activity, and release of the mRNA from the DNA template. This Rickettsia prowazekii (strain Madrid E) protein is Transcription termination factor Rho.